A 675-amino-acid chain; its full sequence is Dihydrolipoyllysine-residue acetyltransferase component of pyruvate dehydrogenase complex (675 aa).

The Lipoyl-binding 1 domain occupies 2–77 (AFSVEMPELG…DVGGVIAIIG (76 aa)). Lysine 43 is subject to N6-lipoyllysine. The disordered stretch occupies residues 77-124 (GDADETPANEAPADEAPAPAEEEEPVKEEPKKEAAPEAPAATGAATDV). Low complexity-rich tracts occupy residues 84-95 (ANEAPADEAPAP) and 112-124 (PEAP…ATDV). The 76-residue stretch at 121–196 (ATDVEMPELG…DVGAVIARIG (76 aa)) folds into the Lipoyl-binding 2 domain. N6-lipoyllysine is present on lysine 162. The interval 200 to 240 (AAAAPAEEEAAPAEEEEPVKEEPKKEAAPEAPAATGAATDV) is disordered. Residues 205–218 (AEEEAAPAEEEEPV) are compositionally biased toward acidic residues. One can recognise a Lipoyl-binding 3 domain in the interval 237 to 312 (ATDVEMPELG…DVGAVIARIG (76 aa)). The residue at position 278 (lysine 278) is an N6-lipoyllysine. A disordered region spans residues 316-368 (AAAAPAEEEAAPAEEEEPVKEEPKKEEPKKEEPKKEAATTPAAASATVSASGD). The segment covering 321–334 (AEEEAAPAEEEEPV) has biased composition (acidic residues). Basic and acidic residues predominate over residues 335 to 352 (KEEPKKEEPKKEEPKKEA). The segment covering 353–366 (ATTPAAASATVSAS) has biased composition (low complexity). Residues 372–409 (YVTPLVRKLAEKHGVDLNTVTGTGIGGRIRKQDVLAAA) form the Peripheral subunit-binding (PSBD) domain. Residues histidine 645 and aspartate 649 contribute to the active site.

It belongs to the 2-oxoacid dehydrogenase family. Forms a 24-polypeptide structural core with octahedral symmetry. Part of an unusual ODH/PDH supercomplex, consisting of AceE (E1), AceF (E2), and Lpd (E3) together with OdhA (E1+E2). (R)-lipoate serves as cofactor.

The enzyme catalyses N(6)-[(R)-dihydrolipoyl]-L-lysyl-[protein] + acetyl-CoA = N(6)-[(R)-S(8)-acetyldihydrolipoyl]-L-lysyl-[protein] + CoA. Is essential for both 2-oxoglutarate dehydrogenase (ODH) and pyruvate dehydrogenase (PDH) activities, but AceF has exclusively transacetylase (and no transsuccinylase) activity. The lipoyl residues required for ODH activity are likely provided by AceF. This is Dihydrolipoyllysine-residue acetyltransferase component of pyruvate dehydrogenase complex (aceF) from Corynebacterium glutamicum (strain ATCC 13032 / DSM 20300 / JCM 1318 / BCRC 11384 / CCUG 27702 / LMG 3730 / NBRC 12168 / NCIMB 10025 / NRRL B-2784 / 534).